The primary structure comprises 468 residues: Ribulose bisphosphate carboxylase large chain (468 aa).

Lys-5 is subject to N6,N6,N6-trimethyllysine. Positions 114 and 164 each coordinate substrate. Lys-166 (proton acceptor) is an active-site residue. Lys-168 serves as a coordination point for substrate. Mg(2+)-binding residues include Lys-192, Asp-194, and Glu-195. Lys-192 is modified (N6-carboxylysine). The active-site Proton acceptor is the His-285. The substrate site is built by Arg-286, His-318, and Ser-370.

It belongs to the RuBisCO large chain family. Type I subfamily. As to quaternary structure, heterohexadecamer of 8 large chains and 8 small chains; disulfide-linked. The disulfide link is formed within the large subunit homodimers. It depends on Mg(2+) as a cofactor. Post-translationally, the disulfide bond which can form in the large chain dimeric partners within the hexadecamer appears to be associated with oxidative stress and protein turnover.

The protein localises to the plastid. It is found in the chloroplast. The enzyme catalyses 2 (2R)-3-phosphoglycerate + 2 H(+) = D-ribulose 1,5-bisphosphate + CO2 + H2O. The catalysed reaction is D-ribulose 1,5-bisphosphate + O2 = 2-phosphoglycolate + (2R)-3-phosphoglycerate + 2 H(+). RuBisCO catalyzes two reactions: the carboxylation of D-ribulose 1,5-bisphosphate, the primary event in carbon dioxide fixation, as well as the oxidative fragmentation of the pentose substrate in the photorespiration process. Both reactions occur simultaneously and in competition at the same active site. The sequence is that of Ribulose bisphosphate carboxylase large chain from Datura stramonium (Jimsonweed).